The chain runs to 260 residues: DNA-directed RNA polymerase subunit Rpo3 (260 aa).

The protein belongs to the archaeal Rpo3/eukaryotic RPB3 RNA polymerase subunit family. In terms of assembly, part of the RNA polymerase complex.

Its subcellular location is the cytoplasm. The catalysed reaction is RNA(n) + a ribonucleoside 5'-triphosphate = RNA(n+1) + diphosphate. Its function is as follows. DNA-dependent RNA polymerase (RNAP) catalyzes the transcription of DNA into RNA using the four ribonucleoside triphosphates as substrates. This Pyrobaculum aerophilum (strain ATCC 51768 / DSM 7523 / JCM 9630 / CIP 104966 / NBRC 100827 / IM2) protein is DNA-directed RNA polymerase subunit Rpo3.